We begin with the raw amino-acid sequence, 263 residues long: Lens fiber major intrinsic protein (263 aa).

Over 1–9 (MWEFRSFSF) the chain is Cytoplasmic. Residues 10–29 (WRAVFAEFFGTMFYVFFGLG) traverse the membrane as a helical segment. Topologically, residues 30-41 (ASLKWAAGPANV) are extracellular. A helical membrane pass occupies residues 42-59 (LVIALAFGLVLATMVQSI). Residues 60-61 (GH) lie on the Cytoplasmic side of the membrane. An intramembrane region (discontinuously helical) is located at residues 62–77 (VSGAHINPAVTFAFLI). The short motif at 68–70 (NPA) is the NPA 1 element. Over 78–82 (GSQMS) the chain is Cytoplasmic. The helical transmembrane segment at 83–106 (LFRAIFYIAAQLLGAVAGAAVLYG) threads the bilayer. The Extracellular portion of the chain corresponds to 107-127 (VTPAAIRGNLALNTLHPGVSL). Residues 128–148 (GQATTVEIFLTLQFVLCIFAT) form a helical membrane-spanning segment. Residues 149–156 (YDERRNGR) lie on the Cytoplasmic side of the membrane. A helical transmembrane segment spans residues 157 to 175 (LGSVSLAIGFSLTLGHLFG). The Extracellular portion of the chain corresponds to 176–178 (LYY). An intramembrane region (discontinuously helical) is located at residues 179 to 193 (TGASMNPARSFAPAV). Residues 184–186 (NPA) carry the NPA 2 motif. Over 194-200 (LTRNFTN) the chain is Extracellular. A helical membrane pass occupies residues 201–222 (HWVYWVGPIIGGALGGLVYDFI). At 223–263 (LFPRMRGLSERLSILKGARPAEPEGQQEATGEPIELKTQSL) the chain is on the cytoplasmic side. The interval 227–237 (MRGLSERLSIL) is interaction with CALM. The disordered stretch occupies residues 241 to 263 (RPAEPEGQQEATGEPIELKTQSL).

The protein belongs to the MIP/aquaporin (TC 1.A.8) family. As to quaternary structure, homotetramer; each monomer provides an independent water pore. Two homotetramers on opposing membranes can dimerize, forming a cell-cell junction. Interacts with CALM; the calcium-calmodulin/CALM complex interacts with the cytoplasmic domains of two aquaporins, leading to channel closure.

The protein resides in the cell membrane. It is found in the cell junction. It catalyses the reaction H2O(in) = H2O(out). The water channel activity is inhibited by calcium through calmodulin/CALM. Aquaporins form homotetrameric transmembrane channels, with each monomer independently mediating water transport across the plasma membrane along its osmotic gradient. Specifically expressed in lens fiber cells, this aquaporin is crucial for maintaining lens water homeostasis and transparency. Beyond water permeability, it also acts as a cell-to-cell adhesion molecule, forming thin junctions between lens fiber cells that are essential for maintaining the ordered structure and transparency of the lens. This Lithobates pipiens (Northern leopard frog) protein is Lens fiber major intrinsic protein.